Here is a 335-residue protein sequence, read N- to C-terminus: MYPLARRILFALDAEKAHHFTLDALYTVYKLGLIPVTDNRTKPVKLMGMDLPNPVGLAAGLDKNGEYIDALGALGFGFIEIGTVTPKPQPGNPQPRLFRVPEHQGIINRMGFNNHGIDTMIRNIEKSKFSGVLGINIGKNAVTPIENAADDYLICLEKAYAHASYITVNISSPNTKNLRALQGGDELSALLEALKNKQAQLASVYGKYVPLAVKIAPDLDEAQIEDIAHVVKSVEMDGIIATNTTIDKSSLGSHPLAGEQGGLSGLPVHEKSNRVLKLLADHIDGKLPIIGVGGIMEGGDAADKIRLGATAVQVYSGLIYKGPALVKECLKALAR.

FMN contacts are provided by residues 59 to 63 and Thr-83; that span reads AGLDK. Lys-63 is a substrate binding site. 108-112 serves as a coordination point for substrate; that stretch reads NRMGF. Residues Asn-136 and Asn-169 each coordinate FMN. Asn-169 is a substrate binding site. Catalysis depends on Ser-172, which acts as the Nucleophile. Position 174 (Asn-174) interacts with substrate. FMN contacts are provided by Lys-214 and Thr-242. 243 to 244 is a substrate binding site; it reads NT. FMN-binding positions include Gly-265, Gly-294, and 315–316; that span reads YS.

It belongs to the dihydroorotate dehydrogenase family. Type 2 subfamily. As to quaternary structure, monomer. FMN serves as cofactor.

Its subcellular location is the cell membrane. It catalyses the reaction (S)-dihydroorotate + a quinone = orotate + a quinol. The protein operates within pyrimidine metabolism; UMP biosynthesis via de novo pathway; orotate from (S)-dihydroorotate (quinone route): step 1/1. Functionally, catalyzes the conversion of dihydroorotate to orotate with quinone as electron acceptor. The protein is Dihydroorotate dehydrogenase (quinone) of Neisseria meningitidis serogroup A / serotype 4A (strain DSM 15465 / Z2491).